Here is a 265-residue protein sequence, read N- to C-terminus: MPAASLTSVRSFVAAPVPTRPAISVEGRRAFAFKGVEKRFGDKIVLDGIDLDVPAGQFVAVIGKSGCGKSTLLRLLAGLDRPTSGSLTLGAEEEGHSRTRFMFQEPRLLPWASVVKNVEIGLTGIAAGQDARQRALDILGEVGLADRADEWPSVLSGGQKQRVALARALVGHPQILALDEPLGALDALTRIEMQQLLERIWLAQKFTAVLVTHDVAEAVTLADRVVVISAGRIALDLEVPVARPRRRGSAELARLEGTILDRLFG.

Residues 31–255 form the ABC transporter domain; sequence FAFKGVEKRF…RRGSAELARL (225 aa). ATP is bound at residue 63 to 70; sequence GKSGCGKS.

Belongs to the ABC transporter superfamily. Aliphatic sulfonates importer (TC 3.A.1.17.2) family. The complex is composed of two ATP-binding proteins (SsuB), two transmembrane proteins (SsuC) and a solute-binding protein (SsuA).

It is found in the cell inner membrane. The catalysed reaction is ATP + H2O + aliphatic sulfonate-[sulfonate-binding protein]Side 1 = ADP + phosphate + aliphatic sulfonateSide 2 + [sulfonate-binding protein]Side 1.. Functionally, part of the ABC transporter complex SsuABC involved in aliphatic sulfonates import. Responsible for energy coupling to the transport system. This Mesorhizobium japonicum (strain LMG 29417 / CECT 9101 / MAFF 303099) (Mesorhizobium loti (strain MAFF 303099)) protein is Aliphatic sulfonates import ATP-binding protein SsuB 1.